Here is a 379-residue protein sequence, read N- to C-terminus: Queuine tRNA-ribosyltransferase (379 aa).

D94 functions as the Proton acceptor in the catalytic mechanism. Residues 94-98 (DSGGF), D148, Q191, and G218 each bind substrate. The tract at residues 249 to 255 (GVGSPDA) is RNA binding. The active-site Nucleophile is the D268. The segment at 273 to 277 (TRIAR) is RNA binding; important for wobble base 34 recognition. C306, C308, C311, and H337 together coordinate Zn(2+).

The protein belongs to the queuine tRNA-ribosyltransferase family. In terms of assembly, homodimer. Within each dimer, one monomer is responsible for RNA recognition and catalysis, while the other monomer binds to the replacement base PreQ1. It depends on Zn(2+) as a cofactor.

It carries out the reaction 7-aminomethyl-7-carbaguanine + guanosine(34) in tRNA = 7-aminomethyl-7-carbaguanosine(34) in tRNA + guanine. Its pathway is tRNA modification; tRNA-queuosine biosynthesis. Functionally, catalyzes the base-exchange of a guanine (G) residue with the queuine precursor 7-aminomethyl-7-deazaguanine (PreQ1) at position 34 (anticodon wobble position) in tRNAs with GU(N) anticodons (tRNA-Asp, -Asn, -His and -Tyr). Catalysis occurs through a double-displacement mechanism. The nucleophile active site attacks the C1' of nucleotide 34 to detach the guanine base from the RNA, forming a covalent enzyme-RNA intermediate. The proton acceptor active site deprotonates the incoming PreQ1, allowing a nucleophilic attack on the C1' of the ribose to form the product. After dissociation, two additional enzymatic reactions on the tRNA convert PreQ1 to queuine (Q), resulting in the hypermodified nucleoside queuosine (7-(((4,5-cis-dihydroxy-2-cyclopenten-1-yl)amino)methyl)-7-deazaguanosine). In Staphylococcus haemolyticus (strain JCSC1435), this protein is Queuine tRNA-ribosyltransferase.